The following is a 461-amino-acid chain: Probable protein phosphatase 2C 40 (461 aa).

Residues 34 to 63 (REASAERASASASAGAGGRERERRPSVAAG) are disordered. One can recognise a PPM-type phosphatase domain in the interval 57–321 (RPSVAAGQAC…DDTTCIVIDI (265 aa)). Positions 98, 99, 273, and 312 each coordinate Mn(2+). A compositionally biased stretch (basic and acidic residues) spans 439-453 (KKEAMEGKRHSRDSS). The tract at residues 439–461 (KKEAMEGKRHSRDSSSRNSGSSE) is disordered.

It belongs to the PP2C family. Mg(2+) serves as cofactor. The cofactor is Mn(2+). As to expression, expressed in leaves, leaf sheaths, panicles, nodes and internodes. Expressed at low levels in roots and stems.

The protein localises to the nucleus. The protein resides in the cytoplasm. It carries out the reaction O-phospho-L-seryl-[protein] + H2O = L-seryl-[protein] + phosphate. It catalyses the reaction O-phospho-L-threonyl-[protein] + H2O = L-threonyl-[protein] + phosphate. Functionally, mediates the negative regulation of osmotic and salt stress tolerance through regulation of the jasmonate and abscisic acid signaling pathways and modulation of the raffinose family oligosaccharide metabolism pathway. This chain is Probable protein phosphatase 2C 40, found in Oryza sativa subsp. japonica (Rice).